Reading from the N-terminus, the 385-residue chain is Probable caffeine synthase MTL1 (385 aa).

Tyr-18, Cys-62, Asn-67, Asp-101, Leu-102, Ser-140, and Phe-141 together coordinate S-adenosyl-L-homocysteine. Positions 158, 161, and 162 each coordinate caffeine. Asn-179 lines the Mg(2+) pocket. Thr-238 provides a ligand contact to caffeine. Asp-261, Phe-263, and Asn-264 together coordinate Mg(2+). Residue Tyr-369 participates in caffeine binding.

Belongs to the methyltransferase superfamily. Type-7 methyltransferase family. It depends on Mg(2+) as a cofactor.

It participates in alkaloid biosynthesis. May be involved in the biosynthesis of caffeine. The protein is Probable caffeine synthase MTL1 of Coffea canephora (Robusta coffee).